The following is a 229-amino-acid chain: Urease accessory protein UreF (229 aa).

This sequence belongs to the UreF family. UreD, UreF and UreG form a complex that acts as a GTP-hydrolysis-dependent molecular chaperone, activating the urease apoprotein by helping to assemble the nickel containing metallocenter of UreC. The UreE protein probably delivers the nickel.

The protein localises to the cytoplasm. Its function is as follows. Required for maturation of urease via the functional incorporation of the urease nickel metallocenter. The sequence is that of Urease accessory protein UreF from Staphylococcus aureus (strain JH1).